We begin with the raw amino-acid sequence, 252 residues long: Probable transcriptional regulator SauR (252 aa).

Residues Asn-6–Ser-68 form the HTH iclR-type domain. Positions Leu-28–Lys-47 form a DNA-binding region, H-T-H motif. The IclR-ED domain maps to Pro-83–Glu-252.

Functionally, may regulate transcription of the sauSTU operon. The polypeptide is Probable transcriptional regulator SauR (sauR) (Cupriavidus necator (strain ATCC 17699 / DSM 428 / KCTC 22496 / NCIMB 10442 / H16 / Stanier 337) (Ralstonia eutropha)).